Here is a 454-residue protein sequence, read N- to C-terminus: Chromosomal replication initiator protein DnaA (454 aa).

The segment at 1-81 (MNNSLWQQCA…PNVVLKVGEA (81 aa)) is domain I, interacts with DnaA modulators. Residues 79 to 110 (GEASPTQRDSGSPQRAAATRRKTPNFSSGNTD) are disordered. Residues 81–117 (ASPTQRDSGSPQRAAATRRKTPNFSSGNTDVEVPFES) form a domain II region. The segment covering 82–91 (SPTQRDSGSP) has biased composition (polar residues). Residues 118 to 334 (NIHPEYTFDN…GALNRVVANV (217 aa)) are domain III, AAA+ region. Positions 162, 164, 165, and 166 each coordinate ATP. A domain IV, binds dsDNA region spans residues 335 to 454 (QLTGRPITID…YRNLIRTLSS (120 aa)).

This sequence belongs to the DnaA family. In terms of assembly, oligomerizes as a right-handed, spiral filament on DNA at oriC.

It is found in the cytoplasm. In terms of biological role, plays an essential role in the initiation and regulation of chromosomal replication. ATP-DnaA binds to the origin of replication (oriC) to initiate formation of the DNA replication initiation complex once per cell cycle. Binds the DnaA box (a 9 base pair repeat at the origin) and separates the double-stranded (ds)DNA. Forms a right-handed helical filament on oriC DNA; dsDNA binds to the exterior of the filament while single-stranded (ss)DNA is stabiized in the filament's interior. The ATP-DnaA-oriC complex binds and stabilizes one strand of the AT-rich DNA unwinding element (DUE), permitting loading of DNA polymerase. After initiation quickly degrades to an ADP-DnaA complex that is not apt for DNA replication. Binds acidic phospholipids. The polypeptide is Chromosomal replication initiator protein DnaA (Idiomarina loihiensis (strain ATCC BAA-735 / DSM 15497 / L2-TR)).